The sequence spans 558 residues: 2-isopropylmalate synthase (558 aa).

One can recognise a Pyruvate carboxyltransferase domain in the interval 31 to 305 (PRWCSTDLRD…YPNLDFSDMR (275 aa)). Mg(2+) is bound by residues D40, H244, H246, and N280. The regulatory domain stretch occupies residues 439–558 (NPDDKGQMKL…NACHPLYKEA (120 aa)).

The protein belongs to the alpha-IPM synthase/homocitrate synthase family. LeuA type 2 subfamily. As to quaternary structure, homodimer. It depends on Mg(2+) as a cofactor.

The protein localises to the cytoplasm. The catalysed reaction is 3-methyl-2-oxobutanoate + acetyl-CoA + H2O = (2S)-2-isopropylmalate + CoA + H(+). It participates in amino-acid biosynthesis; L-leucine biosynthesis; L-leucine from 3-methyl-2-oxobutanoate: step 1/4. In terms of biological role, catalyzes the condensation of the acetyl group of acetyl-CoA with 3-methyl-2-oxobutanoate (2-ketoisovalerate) to form 3-carboxy-3-hydroxy-4-methylpentanoate (2-isopropylmalate). This chain is 2-isopropylmalate synthase, found in Marinomonas sp. (strain MWYL1).